A 310-amino-acid polypeptide reads, in one-letter code: 2-dehydropantoate 2-reductase (310 aa).

NADP(+) contacts are provided by residues 9–14 (GVGAIG) and N100. N100 is a binding site for substrate. K184 acts as the Proton donor in catalysis. Substrate is bound by residues N188, N192, and S259. Position 270 (E270) interacts with NADP(+).

It belongs to the ketopantoate reductase family.

The protein resides in the cytoplasm. It catalyses the reaction (R)-pantoate + NADP(+) = 2-dehydropantoate + NADPH + H(+). It participates in cofactor biosynthesis; (R)-pantothenate biosynthesis; (R)-pantoate from 3-methyl-2-oxobutanoate: step 2/2. Its function is as follows. Catalyzes the NADPH-dependent reduction of ketopantoate into pantoic acid. The sequence is that of 2-dehydropantoate 2-reductase from Aquifex aeolicus (strain VF5).